Here is a 582-residue protein sequence, read N- to C-terminus: DBIRD complex subunit ZNF326 (582 aa).

A mediates transcriptional activation region spans residues 1 to 124 (MDFEDDYTHS…YRNSLDSFGG (124 aa)). A phosphoserine mark is found at Ser48, Ser56, Ser63, Ser69, Ser81, Ser82, Ser91, Ser106, Ser114, Ser118, Ser121, and Ser137. A Glycyl lysine isopeptide (Lys-Gly) (interchain with G-Cter in SUMO2) cross-link involves residue Lys140. The disordered stretch occupies residues 154 to 194 (YSSYSSFSSPHMKPAPVGSRGRGTPAYPESTFGSRNYDAFG). Position 173 is an omega-N-methylarginine (Arg173). Ser212 is subject to Phosphoserine. Residue Arg235 is modified to Omega-N-methylarginine. The Bipartite nuclear localization signal signature appears at 238–260 (KRKMMQPFNKPSGTFIKKPKLAK). A Glycyl lysine isopeptide (Lys-Gly) (interchain with G-Cter in SUMO2) cross-link involves residue Lys240. The disordered stretch occupies residues 243–302 (QPFNKPSGTFIKKPKLAKPMEKISLSKSPTKTDPKNEEEEKRRIEARREKQRRRREKNSE). At Lys247 the chain carries N6-acetyllysine; alternate. Lys247 participates in a covalent cross-link: Glycyl lysine isopeptide (Lys-Gly) (interchain with G-Cter in SUMO2); alternate. A Phosphoserine modification is found at Ser249. Thr251 carries the post-translational modification Phosphothreonine. Glycyl lysine isopeptide (Lys-Gly) (interchain with G-Cter in SUMO2) cross-links involve residues Lys254 and Lys264. Ser270 is modified (phosphoserine). Over residues 272 to 290 (TKTDPKNEEEEKRRIEARR) the composition is skewed to basic and acidic residues. The C2H2 AKAP95-type 1 zinc-finger motif lies at 314–336 (CSFCKFRTFEEKDIELHLESSSH). Lys401 participates in a covalent cross-link: Glycyl lysine isopeptide (Lys-Gly) (interchain with G-Cter in SUMO2). The segment at 407-430 (CSACSVYIPALHSSVQQHLKSPDH) adopts a C2H2 AKAP95-type 2 zinc-finger fold. Glycyl lysine isopeptide (Lys-Gly) (interchain with G-Cter in SUMO2) cross-links involve residues Lys459 and Lys467. A disordered region spans residues 472–582 (FEIQDHSQDQ…DFPVEQPEEN (111 aa)). Over residues 483-523 (IEGDEEDEEKIDEPIEEEEDEDEEEEAEEVGEVEEVEEVEE) the composition is skewed to acidic residues. The span at 530–545 (EGEGNIQGVGEGGEVG) shows a compositional bias: gly residues. Positions 552–567 (GVGEVEEVEELEEETA) are enriched in acidic residues.

The protein belongs to the AKAP95 family. In terms of assembly, component of the DBIRD complex. Interacts with CCAR2; the interaction is direct.

Its subcellular location is the nucleus matrix. Functionally, core component of the DBIRD complex, a multiprotein complex that acts at the interface between core mRNP particles and RNA polymerase II (RNAPII) and integrates transcript elongation with the regulation of alternative splicing: the DBIRD complex affects local transcript elongation rates and alternative splicing of a large set of exons embedded in (A + T)-rich DNA regions. May play a role in neuronal differentiation and is able to bind DNA and activate expression in vitro. This is DBIRD complex subunit ZNF326 (ZNF326) from Homo sapiens (Human).